A 448-amino-acid polypeptide reads, in one-letter code: Asparagine--tRNA ligase (448 aa).

The protein belongs to the class-II aminoacyl-tRNA synthetase family. In terms of assembly, homodimer.

The protein resides in the cytoplasm. It catalyses the reaction tRNA(Asn) + L-asparagine + ATP = L-asparaginyl-tRNA(Asn) + AMP + diphosphate + H(+). This Streptococcus thermophilus (strain ATCC BAA-250 / LMG 18311) protein is Asparagine--tRNA ligase.